The sequence spans 270 residues: Chromo domain-containing protein cec-4 (270 aa).

2 disordered regions span residues 1-24 and 143-229; these read MAKKTVEGEHGTPKTNFTKKETSK and KIAQ…KNDV. The 61-residue stretch at 87–147 folds into the Chromo domain; that stretch reads YAVERVLAHR…HQEDLKIAQT (61 aa). Basic residues-rich tracts occupy residues 151-167 and 187-197; these read TPSKTPKKTPKSLKRRA and TPKQSTKKLKR. Residues 205-229 are compositionally biased toward basic and acidic residues; sequence LVEKSKKKAIPDLENHTLDQEKNDV.

In terms of assembly, interacts with mono-, di- and tri-methylated 'Lys-9' residues on histone H3. Weakly interacts with methylated 'Lys-37' residues on histone H3.

It is found in the nucleus inner membrane. Its subcellular location is the membrane. Functionally, chromatin anchor protein which binds to methylated lysine residues on histone H3, thereby recruiting heterochromatin to the nuclear periphery, especially in embryonic cells, with a lesser role in differentiated cells. May be required for the correct positioning of chromatin and nucleoli in embryos. This chain is Chromo domain-containing protein cec-4, found in Caenorhabditis elegans.